The sequence spans 947 residues: DNA mismatch repair protein MutS (947 aa).

An ATP-binding site is contributed by 620-627 (GPNMSGKS).

It belongs to the DNA mismatch repair MutS family.

Functionally, this protein is involved in the repair of mismatches in DNA. It is possible that it carries out the mismatch recognition step. This protein has a weak ATPase activity. This Clostridioides difficile (strain 630) (Peptoclostridium difficile) protein is DNA mismatch repair protein MutS.